Consider the following 450-residue polypeptide: Bifunctional protein GlmU (450 aa).

The tract at residues 1–229 (MRRHAIILAA…VEEIMGVNDR (229 aa)) is pyrophosphorylase. UDP-N-acetyl-alpha-D-glucosamine is bound by residues 8–11 (LAAG), Lys22, Gln72, and 77–78 (GT). Asp102 provides a ligand contact to Mg(2+). Positions 139, 154, and 227 each coordinate UDP-N-acetyl-alpha-D-glucosamine. Position 227 (Asn227) interacts with Mg(2+). Positions 230–250 (VMLSQAENAMQRRTNHYHMLN) are linker. The N-acetyltransferase stretch occupies residues 251 to 450 (GVTIIDPDST…RQTTKEGYRK (200 aa)). UDP-N-acetyl-alpha-D-glucosamine contacts are provided by Arg332 and Lys350. His362 (proton acceptor) is an active-site residue. The UDP-N-acetyl-alpha-D-glucosamine site is built by Tyr365 and Asn376. Residues 385–386 (NY), Ala422, and Arg439 each bind acetyl-CoA.

The protein in the N-terminal section; belongs to the N-acetylglucosamine-1-phosphate uridyltransferase family. This sequence in the C-terminal section; belongs to the transferase hexapeptide repeat family. In terms of assembly, homotrimer. Mg(2+) serves as cofactor.

It localises to the cytoplasm. The enzyme catalyses alpha-D-glucosamine 1-phosphate + acetyl-CoA = N-acetyl-alpha-D-glucosamine 1-phosphate + CoA + H(+). The catalysed reaction is N-acetyl-alpha-D-glucosamine 1-phosphate + UTP + H(+) = UDP-N-acetyl-alpha-D-glucosamine + diphosphate. Its pathway is nucleotide-sugar biosynthesis; UDP-N-acetyl-alpha-D-glucosamine biosynthesis; N-acetyl-alpha-D-glucosamine 1-phosphate from alpha-D-glucosamine 6-phosphate (route II): step 2/2. It functions in the pathway nucleotide-sugar biosynthesis; UDP-N-acetyl-alpha-D-glucosamine biosynthesis; UDP-N-acetyl-alpha-D-glucosamine from N-acetyl-alpha-D-glucosamine 1-phosphate: step 1/1. It participates in bacterial outer membrane biogenesis; LPS lipid A biosynthesis. Its function is as follows. Catalyzes the last two sequential reactions in the de novo biosynthetic pathway for UDP-N-acetylglucosamine (UDP-GlcNAc). The C-terminal domain catalyzes the transfer of acetyl group from acetyl coenzyme A to glucosamine-1-phosphate (GlcN-1-P) to produce N-acetylglucosamine-1-phosphate (GlcNAc-1-P), which is converted into UDP-GlcNAc by the transfer of uridine 5-monophosphate (from uridine 5-triphosphate), a reaction catalyzed by the N-terminal domain. This is Bifunctional protein GlmU from Staphylococcus aureus (strain MRSA252).